The following is a 249-amino-acid chain: Small ribosomal subunit protein eS6 (249 aa).

A compositionally biased stretch (basic and acidic residues) spans R216–A229. The tract at residues R216–K249 is disordered. Residues S235, S236, S240, S244, and S247 each carry the phosphoserine modification. A compositionally biased stretch (low complexity) spans S236–K249.

The protein belongs to the eukaryotic ribosomal protein eS6 family. In terms of assembly, component of the small ribosomal subunit. Ribosomal protein S6 is the major substrate of protein kinases in eukaryote ribosomes. The phosphorylation is stimulated by growth factors, tumor promoting agents, and mitogens. It is dephosphorylated at growth arrest.

The protein resides in the cytoplasm. In terms of biological role, component of the 40S small ribosomal subunit. Plays an important role in controlling cell growth and proliferation through the selective translation of particular classes of mRNA. The protein is Small ribosomal subunit protein eS6 (rps6) of Oncorhynchus mykiss (Rainbow trout).